The following is a 479-amino-acid chain: Ribosomal RNA small subunit methyltransferase F (479 aa).

Residues 125–131 (AAAPGSK), Glu149, Asp176, and Asp194 each bind S-adenosyl-L-methionine. Cys247 serves as the catalytic Nucleophile.

It belongs to the class I-like SAM-binding methyltransferase superfamily. RsmB/NOP family.

It localises to the cytoplasm. The enzyme catalyses cytidine(1407) in 16S rRNA + S-adenosyl-L-methionine = 5-methylcytidine(1407) in 16S rRNA + S-adenosyl-L-homocysteine + H(+). Specifically methylates the cytosine at position 1407 (m5C1407) of 16S rRNA. The protein is Ribosomal RNA small subunit methyltransferase F of Escherichia coli O81 (strain ED1a).